The primary structure comprises 317 residues: Ceramide reductase (317 aa).

The N-terminal stretch at 1-27 (MATDARGVVAITGATGFLGRHLVRALA) is a signal peptide.

The protein belongs to the NAD(P)-dependent epimerase/dehydratase family.

Its subcellular location is the periplasm. The enzyme catalyses N-acyl-3-oxosphinganine + NADH + H(+) = an N-acylsphinganine + NAD(+). It functions in the pathway lipid metabolism; sphingolipid metabolism. Involved in de novo bacterial ceramide synthesis. Catalyzes the reduction of bacterial oxidized ceramides to bacterial dihydroceramides. This Caulobacter vibrioides (strain NA1000 / CB15N) (Caulobacter crescentus) protein is Ceramide reductase.